The primary structure comprises 1424 residues: Serine/threonine-protein kinase LMTK3 (1424 aa).

An N-terminal signal peptide occupies residues 1–20; sequence MPAPGALILLAAVSASGCLA. A helical membrane pass occupies residues 40-60; sequence AVVLISCSGLLAFIFLLLTCL. The tract at residues 74–95 is disordered; it reads NPEGEDCSGEYTPPAEETSSSQ. Residues 133–411 form the Protein kinase domain; the sequence is LSYLQEIGSG…SDLQLQLTYL (279 aa). Residues 139–147 and Lys-164 contribute to the ATP site; that span reads IGSGWFGKV. Position 232 is a phosphoserine (Ser-232). Asp-266 acts as the Proton acceptor in catalysis. Disordered regions lie at residues 413–465 and 486–516; these read SERP…PDDV and RGAGRGGGAPPWQPASAPPAPHTNPSNPFYE. A compositionally biased stretch (pro residues) spans 418–439; sequence RPPPPPPPPRDGPFPWPWPPSH. The residue at position 490 (Arg-490) is an Omega-N-methylarginine. The segment covering 496 to 507 has biased composition (pro residues); the sequence is PWQPASAPPAPH. A phosphoserine mark is found at Ser-531 and Ser-535. Disordered stretches follow at residues 544–666, 680–964, 976–1024, 1041–1313, and 1325–1424; these read EHGS…PLPC, LERG…MSPE, MSPK…APET, GLEM…RKRK, and LFDQ…PVEN. A compositionally biased stretch (polar residues) spans 571–584; the sequence is QTPSEVPQLVSETW. Acidic residues predominate over residues 638-647; the sequence is AEEEEEESSP. The segment covering 700-713 has biased composition (basic and acidic residues); sequence PPEDDSSLRAERGS. A compositionally biased stretch (pro residues) spans 744-758; it reads RGPPPAPPPPPPPPR. Over residues 759–791 the composition is skewed to low complexity; that stretch reads ASAEPAASPDPPSALASPGSGLSSPGPKPGDSG. Over residues 818 to 841 the composition is skewed to pro residues; it reads PRAPPEPPDPGAPRPPPDPGPLPL. A compositionally biased stretch (basic and acidic residues) spans 935-954; it reads DMKEKVAENGLESPEKEERA. A phosphoserine mark is found at Ser-947, Ser-962, and Ser-977. Residues 994 to 1004 are compositionally biased toward basic and acidic residues; it reads RNTERPPEIGP. The segment covering 1084–1094 has biased composition (gly residues); that stretch reads GSGGRALGGVG. A compositionally biased stretch (low complexity) spans 1095–1105; it reads TAPAGGPASAV. Residues 1167-1177 are compositionally biased toward basic and acidic residues; sequence DPLKPERKGPE. The segment covering 1200-1213 has biased composition (low complexity); the sequence is SRLSLALPPLTLTP. A compositionally biased stretch (gly residues) spans 1231–1241; that stretch reads AAGGEAGGAGA. Positions 1245-1261 are enriched in acidic residues; it reads AEEDGEDEDEDEEDEEA. A compositionally biased stretch (basic and acidic residues) spans 1262–1272; the sequence is AGSRDPGRTRE. Residues 1329–1339 are compositionally biased toward polar residues; that stretch reads ETPTNELSVQG. Residues 1348 to 1360 show a composition bias toward pro residues; that stretch reads STPPAPPTPPHPT.

It belongs to the protein kinase superfamily. Tyr protein kinase family. As to quaternary structure, interacts with ESR1. Interacts with AP-2 complex subunit alpha. Mg(2+) is required as a cofactor. Autophosphorylated. As to expression, expressed in brain. Predominantly expressed in cerebral cortex, thalamus, the cerebellum and hippocampal formation (at protein level).

It localises to the membrane. The protein localises to the cell projection. The protein resides in the axon. It is found in the dendrite. Its subcellular location is the golgi apparatus membrane. It carries out the reaction L-seryl-[protein] + ATP = O-phospho-L-seryl-[protein] + ADP + H(+). It catalyses the reaction L-threonyl-[protein] + ATP = O-phospho-L-threonyl-[protein] + ADP + H(+). In terms of biological role, protein kinase which phosphorylates ESR1 (in vitro) and protects it against proteasomal degradation. May also regulate ESR1 levels indirectly via a PKC-AKT-FOXO3 pathway where it decreases the activity of PKC and the phosphorylation of AKT, thereby increasing binding of transcriptional activator FOXO3 to the ESR1 promoter and increasing ESR1 transcription. Involved in endocytic trafficking of N-methyl-D-aspartate receptors (NMDAR) in neurons. The sequence is that of Serine/threonine-protein kinase LMTK3 (Lmtk3) from Mus musculus (Mouse).